The following is a 322-amino-acid chain: N-acetyl-gamma-glutamyl-phosphate reductase (322 aa).

The active site involves C132.

It belongs to the NAGSA dehydrogenase family. Type 1 subfamily.

It localises to the cytoplasm. It carries out the reaction N-acetyl-L-glutamate 5-semialdehyde + phosphate + NADP(+) = N-acetyl-L-glutamyl 5-phosphate + NADPH + H(+). The protein operates within amino-acid biosynthesis; L-arginine biosynthesis; N(2)-acetyl-L-ornithine from L-glutamate: step 3/4. Functionally, catalyzes the NADPH-dependent reduction of N-acetyl-5-glutamyl phosphate to yield N-acetyl-L-glutamate 5-semialdehyde. The chain is N-acetyl-gamma-glutamyl-phosphate reductase from Parabacteroides distasonis (strain ATCC 8503 / DSM 20701 / CIP 104284 / JCM 5825 / NCTC 11152).